A 354-amino-acid chain; its full sequence is Alanine racemase (354 aa).

Residue Lys-33 is the Proton acceptor; specific for D-alanine of the active site. Residue Lys-33 is modified to N6-(pyridoxal phosphate)lysine. Arg-127 provides a ligand contact to substrate. Tyr-251 (proton acceptor; specific for L-alanine) is an active-site residue. Met-299 lines the substrate pocket.

It belongs to the alanine racemase family. It depends on pyridoxal 5'-phosphate as a cofactor.

The catalysed reaction is L-alanine = D-alanine. Its pathway is amino-acid biosynthesis; D-alanine biosynthesis; D-alanine from L-alanine: step 1/1. In terms of biological role, catalyzes the interconversion of L-alanine and D-alanine. May also act on other amino acids. In Fusobacterium nucleatum subsp. nucleatum (strain ATCC 25586 / DSM 15643 / BCRC 10681 / CIP 101130 / JCM 8532 / KCTC 2640 / LMG 13131 / VPI 4355), this protein is Alanine racemase (alr).